A 491-amino-acid polypeptide reads, in one-letter code: MYIVQIASECAPVIKAGGLGDVVYGLSRELEVRGHCVELVLPKYDTMRYDQIWGLHDAYRDLWVPWYGGAIHCSVYCGWVHGRLCFFIEPHSGDNFFNRGCYYGCPDDNMRFAFFSKAALEFLLQSNKRPDIIHCHDWQTGLVPVLLFEIYKYHGMGNQRVCYTIHNFKHQGFGGPEILWATGLNREPYYFHYDRLRDNFNPFSLNFMKGGIVFSNFVTTVSPNHALEVQFGDYGYGLGHTLYLHRHKFRGVLNGIDYDIWNPEIDRFIPVRYTAQTLENKAKNKKALRDRLLLQDVDKPIVAYIGRLDEQKGVHLVHHAIYRSLFKNAQFVLLGSATERGIGAWFAHEKSYLNNNPDVHIELGFNEELSHLIYAGADIIVVPSHYEPCGLTQMIGLKYGTVPVVRGVGGLVDTVFDRDYDPHKLPEQRNGYVFYHTDPAALESALDRAIDLWYTAPDQFRQLQIQGMSYDYSWNYPGKEYLEIYDFIRHR.

Lysine 15 serves as a coordination point for ADP-alpha-D-glucose.

This sequence belongs to the glycosyltransferase 1 family. Bacterial/plant glycogen synthase subfamily.

The catalysed reaction is [(1-&gt;4)-alpha-D-glucosyl](n) + ADP-alpha-D-glucose = [(1-&gt;4)-alpha-D-glucosyl](n+1) + ADP + H(+). It functions in the pathway glycan biosynthesis; glycogen biosynthesis. Its function is as follows. Synthesizes alpha-1,4-glucan chains using ADP-glucose. In Synechococcus sp. (strain JA-2-3B'a(2-13)) (Cyanobacteria bacterium Yellowstone B-Prime), this protein is Glycogen synthase 1.